Reading from the N-terminus, the 142-residue chain is Putative pre-16S rRNA nuclease (142 aa).

This sequence belongs to the YqgF nuclease family.

The protein resides in the cytoplasm. Could be a nuclease involved in processing of the 5'-end of pre-16S rRNA. The polypeptide is Putative pre-16S rRNA nuclease (Mycoplasmoides gallisepticum (strain R(low / passage 15 / clone 2)) (Mycoplasma gallisepticum)).